The following is a 187-amino-acid chain: Ribosome-recycling factor (187 aa).

This sequence belongs to the RRF family.

It is found in the cytoplasm. Functionally, responsible for the release of ribosomes from messenger RNA at the termination of protein biosynthesis. May increase the efficiency of translation by recycling ribosomes from one round of translation to another. The protein is Ribosome-recycling factor of Roseobacter denitrificans (strain ATCC 33942 / OCh 114) (Erythrobacter sp. (strain OCh 114)).